The primary structure comprises 356 residues: GMP reductase (356 aa).

Residues 26–27 (SR), lysine 78, 132–134 (DVA), and 183–184 (IG) each bind NADP(+). K(+) is bound by residues glycine 184, glycine 186, and cysteine 189. The active-site Thioimidate intermediate is cysteine 189. Residue threonine 191 is the Proton donor/acceptor of the active site. Position 192 (arginine 192) interacts with K(+). Residues 222-224 (DGG), 245-246 (GG), 271-273 (GMS), and 289-293 (RASEG) each bind GMP. Residues methionine 272, 288 to 289 (YR), and 317 to 320 (SACT) each bind NADP(+).

Belongs to the IMPDH/GMPR family.

The catalysed reaction is IMP + NH4(+) + NADP(+) = GMP + NADPH + 2 H(+). In terms of biological role, catalyzes the irreversible NADPH-dependent deamination of GMP to IMP. It functions in the conversion of nucleobase, nucleoside and nucleotide derivatives of G to A nucleotides, and in maintaining the intracellular balance of A and G nucleotides. In Ascaris suum (Pig roundworm), this protein is GMP reductase.